Reading from the N-terminus, the 235-residue chain is Ubiquinone biosynthesis O-methyltransferase (235 aa).

Positions 36, 56, 77, and 122 each coordinate S-adenosyl-L-methionine.

Belongs to the methyltransferase superfamily. UbiG/COQ3 family.

It carries out the reaction a 3-demethylubiquinol + S-adenosyl-L-methionine = a ubiquinol + S-adenosyl-L-homocysteine + H(+). The enzyme catalyses a 3-(all-trans-polyprenyl)benzene-1,2-diol + S-adenosyl-L-methionine = a 2-methoxy-6-(all-trans-polyprenyl)phenol + S-adenosyl-L-homocysteine + H(+). It functions in the pathway cofactor biosynthesis; ubiquinone biosynthesis. Functionally, O-methyltransferase that catalyzes the 2 O-methylation steps in the ubiquinone biosynthetic pathway. The sequence is that of Ubiquinone biosynthesis O-methyltransferase from Leptothrix cholodnii (strain ATCC 51168 / LMG 8142 / SP-6) (Leptothrix discophora (strain SP-6)).